We begin with the raw amino-acid sequence, 336 residues long: Coproporphyrin III ferrochelatase (336 aa).

Fe-coproporphyrin III-binding residues include serine 52 and tyrosine 116. 2 residues coordinate Fe(2+): histidine 176 and glutamate 259.

This sequence belongs to the ferrochelatase family.

The protein resides in the cytoplasm. It catalyses the reaction Fe-coproporphyrin III + 2 H(+) = coproporphyrin III + Fe(2+). Its pathway is porphyrin-containing compound metabolism; protoheme biosynthesis. Its function is as follows. Involved in coproporphyrin-dependent heme b biosynthesis. Catalyzes the insertion of ferrous iron into coproporphyrin III to form Fe-coproporphyrin III. The chain is Coproporphyrin III ferrochelatase from Mycobacterium leprae (strain Br4923).